A 596-amino-acid polypeptide reads, in one-letter code: Pentatricopeptide repeat-containing protein At5g38730 (596 aa).

12 PPR repeats span residues 132 to 166 (VSHVFSWLMIYYAKAGMINDSIVVFEQIRSCGLKP), 167 to 201 (HLQACTVLLNSLVKQRLTDTVWKIFKKMVKLGVVA), 202 to 236 (NIHVYNVLVHACSKSGDPEKAEKLLSEMEEKGVFP), 237 to 271 (DIFTYNTLISVYCKKSMHFEALSVQDRMERSGVAP), 272 to 302 (NIVTYNSFIHGFSREGRMREATRLFREIKDD), 306 to 340 (NHVTYTTLIDGYCRMNDIDEALRLREVMESRGFSP), 341 to 375 (GVVTYNSILRKLCEDGRIREANRLLTEMSGKKIEP), 376 to 410 (DNITCNTLINAYCKIEDMVSAVKVKKKMIESGLKL), 411 to 445 (DMYSYKALIHGFCKVLELENAKEELFSMIEKGFSP), 446 to 480 (GYATYSWLVDGFYNQNKQDEITKLLEEFEKRGLCA), 481 to 515 (DVALYRGLIRRICKLEQVDYAKVLFESMEKKGLVG), and 516 to 550 (DSVIFTTMAYAYWRTGKVTEASALFDVMYNRRLMV).

Belongs to the PPR family. P subfamily.

The polypeptide is Pentatricopeptide repeat-containing protein At5g38730 (Arabidopsis thaliana (Mouse-ear cress)).